Reading from the N-terminus, the 339-residue chain is Tetraacyldisaccharide 4'-kinase (339 aa).

ATP is bound at residue 61–68 (TAGGTGKT).

Belongs to the LpxK family.

It catalyses the reaction a lipid A disaccharide + ATP = a lipid IVA + ADP + H(+). It functions in the pathway glycolipid biosynthesis; lipid IV(A) biosynthesis; lipid IV(A) from (3R)-3-hydroxytetradecanoyl-[acyl-carrier-protein] and UDP-N-acetyl-alpha-D-glucosamine: step 6/6. Functionally, transfers the gamma-phosphate of ATP to the 4'-position of a tetraacyldisaccharide 1-phosphate intermediate (termed DS-1-P) to form tetraacyldisaccharide 1,4'-bis-phosphate (lipid IVA). This is Tetraacyldisaccharide 4'-kinase from Stenotrophomonas maltophilia (strain R551-3).